The sequence spans 299 residues: Bifunctional protein FolD (299 aa).

Residues 164–166 (GRS) and isoleucine 234 each bind NADP(+).

Belongs to the tetrahydrofolate dehydrogenase/cyclohydrolase family. In terms of assembly, homodimer.

The enzyme catalyses (6R)-5,10-methylene-5,6,7,8-tetrahydrofolate + NADP(+) = (6R)-5,10-methenyltetrahydrofolate + NADPH. It catalyses the reaction (6R)-5,10-methenyltetrahydrofolate + H2O = (6R)-10-formyltetrahydrofolate + H(+). It functions in the pathway one-carbon metabolism; tetrahydrofolate interconversion. Catalyzes the oxidation of 5,10-methylenetetrahydrofolate to 5,10-methenyltetrahydrofolate and then the hydrolysis of 5,10-methenyltetrahydrofolate to 10-formyltetrahydrofolate. This is Bifunctional protein FolD from Christiangramia forsetii (strain DSM 17595 / CGMCC 1.15422 / KT0803) (Gramella forsetii).